A 224-amino-acid chain; its full sequence is Peptidyl-prolyl cis-trans isomerase FKBP3 (224 aa).

Ala-2 carries the N-acetylalanine modification. Residue Ser-36 is modified to Phosphoserine. Over residues 89 to 102 the composition is skewed to basic and acidic residues; that stretch reads KLNEDKPKETKSEE. Positions 89–111 are disordered; it reads KLNEDKPKETKSEETLDEGPPKY. Lys-99 carries the post-translational modification N6-acetyllysine. In terms of domain architecture, PPIase FKBP-type spans 128–224; the sequence is GDVVHCWYTG…TFEVELVDID (97 aa). Residue Ser-152 is modified to Phosphoserine. Position 170 is an N6-acetyllysine (Lys-170).

This sequence belongs to the FKBP-type PPIase family.

The protein localises to the nucleus. It carries out the reaction [protein]-peptidylproline (omega=180) = [protein]-peptidylproline (omega=0). With respect to regulation, inhibited preferentially by rapamycin over FK506. Functionally, FK506- and rapamycin-binding proteins (FKBPs) constitute a family of receptors for the two immunosuppressants which inhibit T-cell proliferation by arresting two distinct cytoplasmic signal transmission pathways. PPIases accelerate the folding of proteins. This chain is Peptidyl-prolyl cis-trans isomerase FKBP3 (FKBP3), found in Homo sapiens (Human).